The chain runs to 217 residues: Small ribosomal subunit protein eS6 (217 aa).

It belongs to the eukaryotic ribosomal protein eS6 family.

The chain is Small ribosomal subunit protein eS6 from Hyperthermus butylicus (strain DSM 5456 / JCM 9403 / PLM1-5).